A 209-amino-acid chain; its full sequence is Large ribosomal subunit protein uL1 (209 aa).

It belongs to the universal ribosomal protein uL1 family. In terms of assembly, part of the 50S ribosomal subunit.

Binds directly to 23S rRNA. The L1 stalk is quite mobile in the ribosome, and is involved in E site tRNA release. Its function is as follows. Protein L1 is also a translational repressor protein, it controls the translation of the L11 operon by binding to its mRNA. The polypeptide is Large ribosomal subunit protein uL1 (rplA) (Neorickettsia sennetsu (strain ATCC VR-367 / Miyayama) (Ehrlichia sennetsu)).